Consider the following 221-residue polypeptide: 7-cyano-7-deazaguanine synthase (221 aa).

7 to 17 (LSGGLDSAVSL) contacts ATP. Zn(2+) contacts are provided by Cys192, Cys200, Cys203, and Cys206.

This sequence belongs to the QueC family. In terms of assembly, homodimer. The cofactor is Zn(2+).

It carries out the reaction 7-carboxy-7-deazaguanine + NH4(+) + ATP = 7-cyano-7-deazaguanine + ADP + phosphate + H2O + H(+). The protein operates within purine metabolism; 7-cyano-7-deazaguanine biosynthesis. Its function is as follows. Catalyzes the ATP-dependent conversion of 7-carboxy-7-deazaguanine (CDG) to 7-cyano-7-deazaguanine (preQ(0)). This Pelotomaculum thermopropionicum (strain DSM 13744 / JCM 10971 / SI) protein is 7-cyano-7-deazaguanine synthase.